A 356-amino-acid chain; its full sequence is S-adenosylmethionine:tRNA ribosyltransferase-isomerase (356 aa).

It belongs to the QueA family. Monomer.

It is found in the cytoplasm. The enzyme catalyses 7-aminomethyl-7-carbaguanosine(34) in tRNA + S-adenosyl-L-methionine = epoxyqueuosine(34) in tRNA + adenine + L-methionine + 2 H(+). It participates in tRNA modification; tRNA-queuosine biosynthesis. In terms of biological role, transfers and isomerizes the ribose moiety from AdoMet to the 7-aminomethyl group of 7-deazaguanine (preQ1-tRNA) to give epoxyqueuosine (oQ-tRNA). This Xanthomonas campestris pv. campestris (strain 8004) protein is S-adenosylmethionine:tRNA ribosyltransferase-isomerase.